The chain runs to 439 residues: Glutamate-1-semialdehyde 2,1-aminomutase (439 aa).

Lys-279 carries the post-translational modification N6-(pyridoxal phosphate)lysine.

Belongs to the class-III pyridoxal-phosphate-dependent aminotransferase family. HemL subfamily. As to quaternary structure, homodimer. The cofactor is pyridoxal 5'-phosphate.

It localises to the cytoplasm. It catalyses the reaction (S)-4-amino-5-oxopentanoate = 5-aminolevulinate. It participates in porphyrin-containing compound metabolism; protoporphyrin-IX biosynthesis; 5-aminolevulinate from L-glutamyl-tRNA(Glu): step 2/2. The protein is Glutamate-1-semialdehyde 2,1-aminomutase of Rhodopirellula baltica (strain DSM 10527 / NCIMB 13988 / SH1).